We begin with the raw amino-acid sequence, 570 residues long: Ferroportin (570 aa).

The Cytoplasmic portion of the chain corresponds to 1-23; the sequence is MTKARDQTHQEGCCGSLANYLTS. A helical transmembrane segment spans residues 24 to 53; it reads AKFLLYLGHSLSTWGDRMWHFAVSVFLVEL. Asp39 and His43 together coordinate Fe cation. Residues 54 to 57 are Extracellular-facing; the sequence is YGNS. The chain crosses the membrane as a helical span at residues 58-84; the sequence is LLLTAVYGLVVAGSVLVLGAIIGDWVD. The Cytoplasmic segment spans residues 85 to 87; the sequence is KNA. Residues 88 to 118 traverse the membrane as a helical segment; the sequence is RLKVAQTSLVVQNVSVILCGIILMMVFLHKN. Topologically, residues 119–126 are extracellular; that stretch reads ELLTMYHG. A helical transmembrane segment spans residues 127-162; the sequence is WVLTVCYILIITIANIANLASTATAITIQRDWIVVV. At 163 to 164 the chain is on the cytoplasmic side; the sequence is AG. A helical membrane pass occupies residues 165-195; the sequence is ENRSRLADMNATIRRIDQLTNILAPMAVGQI. Topologically, residues 196–202 are extracellular; that stretch reads MTFGSPV. The chain crosses the membrane as a helical span at residues 203 to 229; the sequence is IGCGFISGWNLVSMCVEYFLLWKVYQK. Topologically, residues 230-306 are cytoplasmic; it reads TPALAVKAAL…DGWVSYYNQP (77 aa). A helical transmembrane segment spans residues 307 to 333; sequence VFLAGMGLAFLYMTVLGFDCITTGYAY. Cys326 contacts Fe cation. The Extracellular segment spans residues 334-338; sequence TQGLS. The chain crosses the membrane as a helical span at residues 339–366; the sequence is GSILSILMGASAITGIMGTVAFTWLRRK. At 367–368 the chain is on the cytoplasmic side; that stretch reads CG. A helical membrane pass occupies residues 369–391; that stretch reads LVRTGLFSGLAQLSCLILCVISV. The Extracellular portion of the chain corresponds to 392–452; that stretch reads FMPGSPLDLS…EMSTKPIPIV (61 aa). Asn437 carries an N-linked (GlcNAc...) asparagine glycan. Residues 453–482 traverse the membrane as a helical segment; the sequence is SVSLLFAGVIAARIGLWSFDLTVTQLLQEN. Topologically, residues 483–487 are cytoplasmic; that stretch reads VIESE. The helical transmembrane segment at 488-512 threads the bilayer; it reads RGIINGVQNSMNYLLDLLHFIMVIL. Residue His506 participates in Fe cation binding. The Extracellular portion of the chain corresponds to 513 to 515; it reads APN. A helical membrane pass occupies residues 516-541; sequence PEAFGLLVLISVSFVAMGHLMYFRFA. The Cytoplasmic portion of the chain corresponds to 542–570; that stretch reads QKTLGNQIFVCGPDEKEVTDENQPNTSVV.

This sequence belongs to the ferroportin (FP) (TC 2.A.100) family. SLC40A subfamily. As to quaternary structure, identified in a complex with STOM. Interacts with HAMP; affinity of the peptide hormone HAMP for SLC40A1 increases by 80-fold in the presence of iron and the interaction promotes SLC40A1 ubiquitination and degradation. Part of a complex composed of SLC40A1/ferroportin, TF/transferrin and HEPH/hephaestin that transfers iron from cells to transferrin. In terms of processing, polyubiquitinated by RNF217; leading to proteasomal degradation. Under conditions of high systemic iron levels, both the hormone peptide hepcidin/HAMP and holo(iron bound)-transferrin/TF induce the ubiquitination, internalization and proteasomal degradation of SLC40A1 to control iron release from cells. High expression in spleen, liver, kidney, heart and duodenum.

It localises to the cell membrane. The protein resides in the basolateral cell membrane. The catalysed reaction is Fe(2+)(in) = Fe(2+)(out). In terms of biological role, transports Fe(2+) from the inside of a cell to the outside of the cell, playing a key role for maintaining systemic iron homeostasis. Transports iron from intestinal, splenic, hepatic cells, macrophages and erythrocytes into the blood to provide iron to other tissues. Controls therefore dietary iron uptake, iron recycling by macrophages and erythrocytes, and release of iron stores in hepatocytes. When iron is in excess in serum, circulating HAMP/hepcidin levels increase resulting in a degradation of SLC40A1, thus limiting the iron efflux to plasma. The chain is Ferroportin from Mus musculus (Mouse).